The sequence spans 393 residues: Acetylornithine aminotransferase (393 aa).

Pyridoxal 5'-phosphate contacts are provided by residues Gly-102–Ala-103 and Phe-136. A N(2)-acetyl-L-ornithine-binding site is contributed by Arg-139. Pyridoxal 5'-phosphate is bound at residue Asp-219–Gln-222. The residue at position 248 (Lys-248) is an N6-(pyridoxal phosphate)lysine. Residue Ser-274 coordinates N(2)-acetyl-L-ornithine. Residue Thr-275 coordinates pyridoxal 5'-phosphate.

This sequence belongs to the class-III pyridoxal-phosphate-dependent aminotransferase family. ArgD subfamily. In terms of assembly, homodimer. Requires pyridoxal 5'-phosphate as cofactor.

The protein localises to the cytoplasm. The catalysed reaction is N(2)-acetyl-L-ornithine + 2-oxoglutarate = N-acetyl-L-glutamate 5-semialdehyde + L-glutamate. It functions in the pathway amino-acid biosynthesis; L-arginine biosynthesis; N(2)-acetyl-L-ornithine from L-glutamate: step 4/4. The sequence is that of Acetylornithine aminotransferase from Wolinella succinogenes (strain ATCC 29543 / DSM 1740 / CCUG 13145 / JCM 31913 / LMG 7466 / NCTC 11488 / FDC 602W) (Vibrio succinogenes).